A 453-amino-acid polypeptide reads, in one-letter code: V-type proton ATPase subunit B (453 aa).

ATP is bound at residue Arg-341.

Belongs to the ATPase alpha/beta chains family. V-ATPase is a heteromultimeric enzyme made up of two complexes: the ATP-hydrolytic V1 complex and the proton translocation V0 complex. The V1 complex consists of three catalytic AB heterodimers that form a heterohexamer, three peripheral stalks each consisting of EG heterodimers, one central rotor including subunits D and F, and the regulatory subunits C and H. The proton translocation complex V0 consists of the proton transport subunit a, a ring of proteolipid subunits c9c'', rotary subunit d, subunits e and f, and two accessory subunits.

In terms of biological role, non-catalytic subunit of the V1 complex of vacuolar(H+)-ATPase (V-ATPase), a multisubunit enzyme composed of a peripheral complex (V1) that hydrolyzes ATP and a membrane integral complex (V0) that translocates protons. V-ATPase is responsible for acidifying and maintaining the pH of intracellular compartments and in some cell types, is targeted to the plasma membrane, where it is responsible for acidifying the extracellular environment. Essential for the proper assembly and activity of V-ATPase. This Gallus gallus (Chicken) protein is V-type proton ATPase subunit B (ATP6V1B).